A 156-amino-acid polypeptide reads, in one-letter code: Small ribosomal subunit protein uS7 (156 aa).

It belongs to the universal ribosomal protein uS7 family. Part of the 30S ribosomal subunit. Contacts proteins S9 and S11.

One of the primary rRNA binding proteins, it binds directly to 16S rRNA where it nucleates assembly of the head domain of the 30S subunit. Is located at the subunit interface close to the decoding center, probably blocks exit of the E-site tRNA. The polypeptide is Small ribosomal subunit protein uS7 (Histophilus somni (strain 129Pt) (Haemophilus somnus)).